The following is a 344-amino-acid chain: AP2/ERF and B3 domain-containing transcription factor RAV1 (344 aa).

The segment covering 1 to 15 has biased composition (low complexity); the sequence is MESSSVDESTTSTGS. The interval 1–22 is disordered; that stretch reads MESSSVDESTTSTGSICETPAI. The AP2/ERF DNA-binding region spans 61–116; that stretch reads KYKGVVPQPNGRWGAQIYEKHQRVWLGTFNEEDEAARAYDVAVHRFRRRDAVTNFK. The tract at residues 148–169 is disordered; it reads ELEQSKRRRNGNGNMTRTLLTS. The segment at residues 188–292 is a DNA-binding region (TF-B3); the sequence is FEKAVTPSDV…QLYIGWKSRS (105 aa).

Belongs to the AP2/ERF transcription factor family. RAV subfamily. In terms of assembly, monomer. As to expression, expressed in all tissues examined: Roots, rosette leaves, cauline leaves, inflorescence stems, flowers and siliques. Highest expression in roots and rosette leaves. Very low expression in flowers.

It localises to the nucleus. Functionally, binds specifically to bipartite recognition sequences composed of two unrelated motifs, 5'-CAACA-3' and 5'-CACCTG-3'. May function as negative regulator of plant growth and development. The sequence is that of AP2/ERF and B3 domain-containing transcription factor RAV1 (RAV1) from Arabidopsis thaliana (Mouse-ear cress).